We begin with the raw amino-acid sequence, 151 residues long: uncharacterized protein (151 aa).

Residues 35-147 are a coiled coil; sequence GIFENERQKL…RETLQESLED (113 aa).

This is an uncharacterized protein from Helicobacter hepaticus (strain ATCC 51449 / 3B1).